Reading from the N-terminus, the 395-residue chain is Formate-dependent phosphoribosylglycinamide formyltransferase (395 aa).

Residues 22-23 (EL) and Glu82 each bind N(1)-(5-phospho-beta-D-ribosyl)glycinamide. ATP-binding positions include Arg115, Lys156, 161–166 (SSGKGQ), 196–199 (EGFI), and Glu204. The ATP-grasp domain maps to 120-309 (RLAAETLGLP…EFALHARAIL (190 aa)). Mg(2+) is bound by residues Glu268 and Glu280. Residues Asp287, Lys356, and 363–364 (RR) contribute to the N(1)-(5-phospho-beta-D-ribosyl)glycinamide site.

Belongs to the PurK/PurT family. Homodimer.

It catalyses the reaction N(1)-(5-phospho-beta-D-ribosyl)glycinamide + formate + ATP = N(2)-formyl-N(1)-(5-phospho-beta-D-ribosyl)glycinamide + ADP + phosphate + H(+). It participates in purine metabolism; IMP biosynthesis via de novo pathway; N(2)-formyl-N(1)-(5-phospho-D-ribosyl)glycinamide from N(1)-(5-phospho-D-ribosyl)glycinamide (formate route): step 1/1. Involved in the de novo purine biosynthesis. Catalyzes the transfer of formate to 5-phospho-ribosyl-glycinamide (GAR), producing 5-phospho-ribosyl-N-formylglycinamide (FGAR). Formate is provided by PurU via hydrolysis of 10-formyl-tetrahydrofolate. In Stenotrophomonas maltophilia (strain K279a), this protein is Formate-dependent phosphoribosylglycinamide formyltransferase.